We begin with the raw amino-acid sequence, 353 residues long: Probable WRKY transcription factor 7 (353 aa).

The segment at 117-259 is disordered; sequence VEEKKPETSS…SSRCHCSKKR (143 aa). The segment covering 158-176 has biased composition (low complexity); sequence SHNNNNNQNQTKNGSSSSS. Composition is skewed to polar residues over residues 184 to 204 and 213 to 229; these read APST…SFMS and THMS…QLSG. The WRKY DNA-binding region spans 275–341; sequence KMADIPSDEF…YEGDHNHALV (67 aa).

This sequence belongs to the WRKY group II-d family. As to expression, in young, mature and senescent leaves.

It localises to the nucleus. In terms of biological role, transcription factor. Interacts specifically with the W box (5'-(T)TGAC[CT]-3'), a frequently occurring elicitor-responsive cis-acting element. The protein is Probable WRKY transcription factor 7 (WRKY7) of Arabidopsis thaliana (Mouse-ear cress).